The following is a 94-amino-acid chain: Large ribosomal subunit protein eL42 (94 aa).

Zn(2+) contacts are provided by Cys-11, Cys-14, Cys-70, and Cys-73. A C4-type zinc finger spans residues 11 to 73 (CPYCKKHTIH…IDLRFKCTEC (63 aa)).

This sequence belongs to the eukaryotic ribosomal protein eL42 family. Part of the 50S ribosomal subunit. The cofactor is Zn(2+).

In terms of biological role, binds to the 23S rRNA. The polypeptide is Large ribosomal subunit protein eL42 (Methanocaldococcus jannaschii (strain ATCC 43067 / DSM 2661 / JAL-1 / JCM 10045 / NBRC 100440) (Methanococcus jannaschii)).